The following is a 482-amino-acid chain: uncharacterized protein (482 aa).

The HTH gntR-type domain occupies 12 to 80 (LPKYRQIVHF…MGKGTVVINN (69 aa)). Residues 40–59 (QRTLAKDFQVNRSTVITALE) constitute a DNA-binding region (H-T-H motif). Lys-325 is modified (N6-(pyridoxal phosphate)lysine).

It in the C-terminal section; belongs to the class-I pyridoxal-phosphate-dependent aminotransferase family. Pyridoxal 5'-phosphate is required as a cofactor.

This is an uncharacterized protein from Bacillus subtilis (strain 168).